Reading from the N-terminus, the 509-residue chain is Maturase K (509 aa).

This sequence belongs to the intron maturase 2 family. MatK subfamily.

The protein localises to the plastid. It localises to the chloroplast. Functionally, usually encoded in the trnK tRNA gene intron. Probably assists in splicing its own and other chloroplast group II introns. In Abies firma (Momi fir), this protein is Maturase K.